The primary structure comprises 87 residues: Kawaguchipeptin peptide (87 aa).

A propeptide spanning residues 1–33 is cleaved from the precursor; the sequence is MKNPTLLPKLTAPVERPAVTSSDLKQASSVDAA. The 3'-prenyl-2',N2-cyclotryptophan; partial moiety is linked to residue Trp-34. The segment at residues 34–44 is a cross-link (cyclopeptide (Trp-Pro)); the sequence is WLNGDNNWSTP. Leu-35 bears the D-leucine; partial mark. Trp-41 carries 3'-prenyl-2',N2-cyclotryptophan; partial lipidation. Positions 45-51 are excised as a propeptide; it reads FAGVNAA. Trp-52 carries 3'-prenyl-2',N2-cyclotryptophan; partial lipidation. The segment at residues 52–62 is a cross-link (cyclopeptide (Trp-Pro)); the sequence is WLNGDNNWSTP. Position 53 is a D-leucine; partial (Leu-53). A lipid anchor (3'-prenyl-2',N2-cyclotryptophan; partial) is attached at Trp-59. The propeptide occupies 63–69; sequence FAGVNAA. Residue Trp-70 is the site of 3'-prenyl-2',N2-cyclotryptophan; partial attachment. Positions 70 to 80 form a cross-link, cyclopeptide (Trp-Pro); that stretch reads WLNGDNNWSTP. Leu-71 carries the D-leucine; partial modification. Residue Trp-77 is the site of 3'-prenyl-2',N2-cyclotryptophan; partial attachment. Positions 81–87 are excised as a propeptide; that stretch reads FAADGAE.

Kawaguchipeptin A contains a D-Leu and 2 prenylated Trp, whereas kawaguchipeptin B only contains unmodified amino acids. In terms of processing, kawaguchipeptin A is prenylated in vivo. Upon expression in E.coli of the whole operon, Trp residues are prenylated by C-prenyltransferase KgpF. Prenylation by KgpF is likely the last enzymatic step in the biosynthetic maturation of kawaguchipeptin A.

In terms of biological role, both kawaguchipeptin A and B, which only differ by post-translational modifications, have antibacterial activities, since they inhibit the growth of the Gram-positive bacterium S.aureus at a concentration of 1 ug/mL. The chain is Kawaguchipeptin peptide from Microcystis aeruginosa (strain NIES-88 / KW-MA1-3).